The primary structure comprises 897 residues: Alanine--tRNA ligase (897 aa).

Residues His-591, His-595, Cys-695, and His-699 each coordinate Zn(2+).

This sequence belongs to the class-II aminoacyl-tRNA synthetase family. The cofactor is Zn(2+).

The protein localises to the cytoplasm. The catalysed reaction is tRNA(Ala) + L-alanine + ATP = L-alanyl-tRNA(Ala) + AMP + diphosphate. In terms of biological role, catalyzes the attachment of alanine to tRNA(Ala) in a two-step reaction: alanine is first activated by ATP to form Ala-AMP and then transferred to the acceptor end of tRNA(Ala). Also edits incorrectly charged Ser-tRNA(Ala) and Gly-tRNA(Ala) via its editing domain. This chain is Alanine--tRNA ligase, found in Methanobrevibacter smithii (strain ATCC 35061 / DSM 861 / OCM 144 / PS).